Here is a 319-residue protein sequence, read N- to C-terminus: tRNA-cytidine(32) 2-sulfurtransferase (319 aa).

The PP-loop motif motif lies at 43 to 48 (SGGKDS). [4Fe-4S] cluster is bound by residues cysteine 118, cysteine 121, and cysteine 209. Residues 272 to 297 (DLAFDSEKMPERFSDGSEEDESEIKI) form a disordered region. A compositionally biased stretch (basic and acidic residues) spans 276–286 (DSEKMPERFSD).

It belongs to the TtcA family. Homodimer. Mg(2+) is required as a cofactor. Requires [4Fe-4S] cluster as cofactor.

It localises to the cytoplasm. The catalysed reaction is cytidine(32) in tRNA + S-sulfanyl-L-cysteinyl-[cysteine desulfurase] + AH2 + ATP = 2-thiocytidine(32) in tRNA + L-cysteinyl-[cysteine desulfurase] + A + AMP + diphosphate + H(+). Its pathway is tRNA modification. Its function is as follows. Catalyzes the ATP-dependent 2-thiolation of cytidine in position 32 of tRNA, to form 2-thiocytidine (s(2)C32). The sulfur atoms are provided by the cysteine/cysteine desulfurase (IscS) system. The sequence is that of tRNA-cytidine(32) 2-sulfurtransferase from Neisseria gonorrhoeae (strain ATCC 700825 / FA 1090).